The following is a 241-amino-acid chain: Spheroidene monooxygenase (241 aa).

The protein belongs to the CrtA family. The cofactor is heme.

The enzyme catalyses spheroidene + 4 reduced [2Fe-2S]-[ferredoxin] + 2 O2 + 4 H(+) = spheroiden-2-one + 4 oxidized [2Fe-2S]-[ferredoxin] + 3 H2O. It carries out the reaction spirilloxanthin + 4 reduced [2Fe-2S]-[ferredoxin] + 2 O2 + 4 H(+) = 2-oxospirilloxanthin + 4 oxidized [2Fe-2S]-[ferredoxin] + 3 H2O. The catalysed reaction is 2-oxospirilloxanthin + 4 reduced [2Fe-2S]-[ferredoxin] + 2 O2 + 4 H(+) = 2,2'-dioxospirilloxanthin + 4 oxidized [2Fe-2S]-[ferredoxin] + 3 H2O. It catalyses the reaction spheroidene + 2 reduced [2Fe-2S]-[ferredoxin] + O2 + 2 H(+) = 2-hydroxyspheroidene + 2 oxidized [2Fe-2S]-[ferredoxin] + H2O. The enzyme catalyses 2-hydroxyspheroidene + 2 reduced [2Fe-2S]-[ferredoxin] + O2 + 2 H(+) = 2,2-dihydroxyspheroidene + 2 oxidized [2Fe-2S]-[ferredoxin] + H2O. It carries out the reaction 2,2-dihydroxyspheroidene = spheroiden-2-one + H2O. The catalysed reaction is spirilloxanthin + 2 reduced [2Fe-2S]-[ferredoxin] + O2 + 2 H(+) = 2-hydroxyspirilloxanthin + 2 oxidized [2Fe-2S]-[ferredoxin] + H2O. It catalyses the reaction 2-hydroxyspirilloxanthin + 2 reduced [2Fe-2S]-[ferredoxin] + O2 + 2 H(+) = 2,2-dihydroxyspirilloxanthin + 2 oxidized [2Fe-2S]-[ferredoxin] + H2O. The enzyme catalyses 2,2-dihydroxyspirilloxanthin = 2-oxospirilloxanthin + H2O. It carries out the reaction 2-oxospirilloxanthin + 2 reduced [2Fe-2S]-[ferredoxin] + O2 + 2 H(+) = 2'-hydroxy-2-oxospirilloxanthin + 2 oxidized [2Fe-2S]-[ferredoxin] + H2O. The catalysed reaction is 2'-hydroxy-2-oxospirilloxanthin + 2 reduced [2Fe-2S]-[ferredoxin] + O2 + 2 H(+) = 2',2'-dihydroxy-2-oxospirilloxanthin + 2 oxidized [2Fe-2S]-[ferredoxin] + H2O. It catalyses the reaction 2',2'-dihydroxy-2-oxospirilloxanthin = 2,2'-dioxospirilloxanthin + H2O. It participates in carotenoid biosynthesis; spheroidene biosynthesis. In terms of biological role, involved in the biosynthesis of the carotenoid spheroidene. Catalyzes the introduction of one keto group at the C-2 position of spheroidene. In vitro, can also catalyze the introduction of two keto groups at the C-2 and C-2' positions of spirilloxanthin, but spirilloxanthin biosynthesis pathway is not present in R.capsulatus. The sequence is that of Spheroidene monooxygenase from Rhodobacter capsulatus (strain ATCC BAA-309 / NBRC 16581 / SB1003).